We begin with the raw amino-acid sequence, 254 residues long: tRNA (guanine-N(7)-)-methyltransferase (254 aa).

Basic and acidic residues predominate over residues 1 to 11; sequence MSISDNSREEL. Positions 1–25 are disordered; sequence MSISDNSREELGELPAGRPLQSEFN. Residues Glu83, Glu108, Asp135, and Asp158 each contribute to the S-adenosyl-L-methionine site. Asp158 is a catalytic residue. Lys162 serves as a coordination point for substrate. The interval 164–169 is interaction with RNA; sequence RHNKRR. Substrate is bound by residues Asp194 and 232-235; that span reads TKFE.

The protein belongs to the class I-like SAM-binding methyltransferase superfamily. TrmB family.

It catalyses the reaction guanosine(46) in tRNA + S-adenosyl-L-methionine = N(7)-methylguanosine(46) in tRNA + S-adenosyl-L-homocysteine. It functions in the pathway tRNA modification; N(7)-methylguanine-tRNA biosynthesis. Catalyzes the formation of N(7)-methylguanine at position 46 (m7G46) in tRNA. The sequence is that of tRNA (guanine-N(7)-)-methyltransferase from Corynebacterium efficiens (strain DSM 44549 / YS-314 / AJ 12310 / JCM 11189 / NBRC 100395).